The following is a 395-amino-acid chain: Putative gustatory receptor 93b (395 aa).

The Cytoplasmic portion of the chain corresponds to 1–18 (MSGLLVMPRILRCLNVSR). The helical transmembrane segment at 19-39 (ISAILLRSCFLYGTFFGVITF) threads the bilayer. Topologically, residues 40–89 (RIERKDSQLVAINRRGYLWICLVIRLLASCFYGYSYDAWSGQYEDMYLRA) are extracellular. Residues 90–110 (FFGFRLIGCLICSVIILVMQF) traverse the membrane as a helical segment. Topologically, residues 111 to 153 (WFGEELINLVNRFLQLFRRMQSLTNSPKNRFGDRAEFLLMFSK) are cytoplasmic. Residues 154 to 174 (VFSLLFVFMAFRLMLSPWFLL) form a helical membrane-spanning segment. The Extracellular portion of the chain corresponds to 175 to 183 (TLVCDLYTS). A helical membrane pass occupies residues 184–204 (VGTGMITHLCFVGYLSIGVLY). Over 205-267 (RDLNNYVDCQ…RSFQQLFDLP (63 aa)) the chain is Cytoplasmic. Residues 268–288 (LFLSLAQSLLAMSMVSYHAIL) form a helical membrane-spanning segment. Residues 289–293 (RRQYS) lie on the Extracellular side of the membrane. A helical transmembrane segment spans residues 294–314 (FNLWGLVIKLLIDVVLLTMSV). At 315–369 (HSAVNGSRLIRRLSFENFYVTDSQSYHQKLELFLGRLQHQELRVFPLGLFEVSNE) the chain is on the cytoplasmic side. The chain crosses the membrane as a helical span at residues 370–390 (LTLFFLSAMVTYLVFLVQYGM). At 391–395 (QSQQI) the chain is on the extracellular side.

The protein belongs to the insect chemoreceptor superfamily. Gustatory receptor (GR) family. Gr93a subfamily. In larvae, is expressed in neurons of the terminal external chemosensory organ and of the dorsal pharyngeal sense organ.

The protein resides in the cell membrane. In terms of biological role, probable gustatory receptor which mediates acceptance or avoidance behavior, depending on its substrates. The sequence is that of Putative gustatory receptor 93b (Gr93b) from Drosophila melanogaster (Fruit fly).